A 657-amino-acid polypeptide reads, in one-letter code: Glycogen debranching enzyme (657 aa).

The active-site Nucleophile is Asp-336. Glu-371 acts as the Proton donor in catalysis. Residues 460–479 form a disordered region; the sequence is ANGEENRDGTNNNYSNNHGK.

The protein belongs to the glycosyl hydrolase 13 family.

It catalyses the reaction Hydrolysis of (1-&gt;6)-alpha-D-glucosidic linkages to branches with degrees of polymerization of three or four glucose residues in limit dextrin.. It functions in the pathway glycan degradation; glycogen degradation. Functionally, removes maltotriose and maltotetraose chains that are attached by 1,6-alpha-linkage to the limit dextrin main chain, generating a debranched limit dextrin. The protein is Glycogen debranching enzyme of Escherichia coli O81 (strain ED1a).